A 90-amino-acid chain; its full sequence is Bombyxin G-1 (90 aa).

The signal sequence occupies residues 1–19 (MKLIIFVVFCITIYGSTSG). 3 disulfide bridges follow: Cys-28-Cys-77, Cys-40-Cys-90, and Cys-76-Cys-81. The propeptide at 49–67 (NTQYEGYHWPLLAYSEERI) is c peptide like.

This sequence belongs to the insulin family. In terms of assembly, heterodimer of a B chain and an A chain linked by two disulfide bonds.

Its subcellular location is the secreted. The polypeptide is Bombyxin G-1 (BBXG1) (Bombyx mori (Silk moth)).